Reading from the N-terminus, the 479-residue chain is uncharacterized protein (479 aa).

Helical transmembrane passes span 25 to 45 (VVFV…LFFF), 63 to 83 (IAMI…LAGG), 110 to 130 (LFGP…TVIF), 133 to 153 (GVFN…AGIL), 175 to 195 (VLSI…VLGI), 229 to 249 (ILLY…IVWL), 287 to 307 (LILN…IAFI), and 328 to 348 (LFAP…LLLL).

It in the C-terminal section; belongs to the GatC family.

The protein localises to the cell membrane. This is an uncharacterized protein from Mycoplasma pneumoniae (strain ATCC 29342 / M129 / Subtype 1) (Mycoplasmoides pneumoniae).